Consider the following 117-residue polypeptide: Large ribosomal subunit protein uL24 (117 aa).

Basic residues predominate over residues 1–10; sequence MSKQPRKQRK. The interval 1-28 is disordered; that stretch reads MSKQPRKQRKALYNAPAHARGKHMSATL.

This sequence belongs to the universal ribosomal protein uL24 family. As to quaternary structure, part of the 50S ribosomal subunit.

Its function is as follows. One of two assembly initiator proteins, it binds directly to the 5'-end of the 23S rRNA, where it nucleates assembly of the 50S subunit. Located at the polypeptide exit tunnel on the outside of the subunit. The polypeptide is Large ribosomal subunit protein uL24 (Methanobrevibacter smithii (strain ATCC 35061 / DSM 861 / OCM 144 / PS)).